Here is a 407-residue protein sequence, read N- to C-terminus: Phosphoglycerate kinase (407 aa).

Substrate contacts are provided by residues 21 to 23 (DLN), Arg-36, 59 to 62 (HQGR), Arg-116, and Arg-156. Residues Glu-332 and 358–361 (GGDT) each bind ATP.

This sequence belongs to the phosphoglycerate kinase family. As to quaternary structure, monomer.

The protein resides in the cytoplasm. The enzyme catalyses (2R)-3-phosphoglycerate + ATP = (2R)-3-phospho-glyceroyl phosphate + ADP. It participates in carbohydrate degradation; glycolysis; pyruvate from D-glyceraldehyde 3-phosphate: step 2/5. The sequence is that of Phosphoglycerate kinase from Halorubrum lacusprofundi (strain ATCC 49239 / DSM 5036 / JCM 8891 / ACAM 34).